The chain runs to 369 residues: Histidine decarboxylase (369 aa).

Histidine 119 lines the substrate pocket. Lysine 230 is subject to N6-(pyridoxal phosphate)lysine.

This sequence belongs to the group II decarboxylase family. Homotetramer. The cofactor is pyridoxal 5'-phosphate.

It catalyses the reaction L-histidine + H(+) = histamine + CO2. In Mesorhizobium japonicum (strain LMG 29417 / CECT 9101 / MAFF 303099) (Mesorhizobium loti (strain MAFF 303099)), this protein is Histidine decarboxylase.